We begin with the raw amino-acid sequence, 249 residues long: Cytoplasmic envelopment protein 1 (249 aa).

This sequence belongs to the herpesviridae cytoplasmic envelopment protein 1 family.

The protein localises to the virion. It localises to the virion tegument. Its subcellular location is the host cytoplasm. The protein resides in the host Golgi apparatus. In terms of biological role, plays a critical role in cytoplasmic virus egress. Participates in the final step of tegumentation and envelope acquisition within the host cytoplasm. The protein is Cytoplasmic envelopment protein 1 (UL103) of Homo sapiens (Human).